The primary structure comprises 92 residues: MEKSRKILVGVLLFTASVAICLAQHWSYGLQPGGKRNAENLVESFQEIANEMESLGEGQKAECPGSYQHPRLSDLKETMASLIEGEARRKEI.

The signal sequence occupies residues 1–23 (MEKSRKILVGVLLFTASVAICLA). Gln24 is modified (pyrrolidone carboxylic acid). Glycine amide is present on Gly33.

It belongs to the GnRH family.

It is found in the secreted. Functionally, stimulates the secretion of gonadotropins. In Gallus gallus (Chicken), this protein is Progonadoliberin-1 (GNRH1).